The following is a 328-amino-acid chain: Probable voltage-gated potassium channel subunit beta (328 aa).

3 residues coordinate NADP(+): Trp-21, Gln-27, and Asp-49. Tyr-54 functions as the Proton donor/acceptor in the catalytic mechanism. The NADP(+) site is built by Ser-152, Gln-178, Trp-207, Ser-208, Pro-209, Leu-210, Ala-211, Lys-218, Arg-229, Gly-285, Thr-287, Gln-291, Glu-294, and Asn-295.

It belongs to the shaker potassium channel beta subunit family. As to quaternary structure, forms heteromultimeric complexes with potassium channel alpha subunits. In terms of tissue distribution, expressed in late-developed leaves with the highest expression in the flag leaf (at protein level).

Probable accessory potassium channel protein which modulates the activity of the pore-forming alpha subunit. The sequence is that of Probable voltage-gated potassium channel subunit beta (KOB1) from Oryza sativa subsp. japonica (Rice).